The following is a 397-amino-acid chain: Elongation factor Tu (397 aa).

The tr-type G domain occupies 10-206; that stretch reads KPHVNIGTIG…AVDENVPDPE (197 aa). Positions 19–26 are G1; that stretch reads GHVDHGKT. 19–26 is a binding site for GTP; sequence GHVDHGKT. T26 is a Mg(2+) binding site. The segment at 62 to 66 is G2; that stretch reads GITIQ. Residues 83–86 are G3; sequence DAPG. GTP contacts are provided by residues 83-87 and 138-141; these read DAPGH and NKAD. Residues 138–141 are G4; it reads NKAD. Residues 176–178 are G5; it reads SAL.

It belongs to the TRAFAC class translation factor GTPase superfamily. Classic translation factor GTPase family. EF-Tu/EF-1A subfamily. Monomer.

Its subcellular location is the cytoplasm. It carries out the reaction GTP + H2O = GDP + phosphate + H(+). GTP hydrolase that promotes the GTP-dependent binding of aminoacyl-tRNA to the A-site of ribosomes during protein biosynthesis. The sequence is that of Elongation factor Tu from Saccharopolyspora erythraea (strain ATCC 11635 / DSM 40517 / JCM 4748 / NBRC 13426 / NCIMB 8594 / NRRL 2338).